The primary structure comprises 140 residues: Putative membrane protein ORF7 (140 aa).

Residues 44–60 (TCAVSFFALFMLIIWVL) traverse the membrane as a helical segment. A disordered region spans residues 66–118 (PEGSTTRGTDAHTQTEGSTTRGTDAHTQTEGSRDQGSMTPEADDLTRPPLGHG). Polar residues predominate over residues 68-103 (GSTTRGTDAHTQTEGSTTRGTDAHTQTEGSRDQGSM).

Its subcellular location is the membrane. The protein is Putative membrane protein ORF7 (ORF7) of Ictalurid herpesvirus 1 (strain Auburn) (IcHV-1).